Here is a 961-residue protein sequence, read N- to C-terminus: Ras-interacting protein 1 (961 aa).

Residues 1–10 (MLSGERKEGG) show a composition bias toward basic and acidic residues. Disordered regions lie at residues 1-21 (MLSG…HLPV), 35-70 (LGRR…PHVE), and 96-116 (RGSG…QRWA). The span at 41-57 (SAASVKSSSSDTGSRSS) shows a compositional bias: low complexity. The segment covering 59–68 (PLPPPPPPPH) has biased composition (pro residues). R96 is subject to Omega-N-methylarginine. Gly residues predominate over residues 98–110 (SGAGGAGGPGTPG). The Ras-associating domain occupies 141 to 253 (PPGVLKIFAS…RRFELRGREE (113 aa)). Positions 261–352 (AFGAADADGT…MAPGAADAQM (92 aa)) are disordered. Residues S274 and S286 each carry the phosphoserine modification. The segment covering 284–295 (AASGGAALASPG) has biased composition (low complexity). Over residues 296–307 (PGSGSGTPTGSG) the composition is skewed to gly residues. Low complexity predominate over residues 314–327 (NLSLRRSVSELSLQ). Phosphoserine is present on residues S320, S322, S325, and S413. The 302-residue stretch at 594–895 (GRLARLIKEA…PPAERDAVDT (302 aa)) folds into the Dilute domain.

As to quaternary structure, interacts with Ras family members that have been activated by GTP binding. Interacts with HRAS, RAP1A, RAP2, RRAS, RAF1 and RRAS2. Interacts with MYH9 and ARHGAP29. Detected in kidney, heart, skeletal muscle, small intestine and lung.

The protein resides in the cytoplasm. The protein localises to the perinuclear region. It localises to the golgi apparatus. Its subcellular location is the golgi stack. In terms of biological role, required for the proper formation of vascular structures that develop via both vasculogenesis and angiogenesis. Acts as a critical and vascular-specific regulator of GTPase signaling, cell architecture, and adhesion, which is essential for endothelial cell morphogenesis and blood vessel tubulogenesis. Regulates the activity of Rho GTPases in part by recruiting ARHGAP29 and suppressing RhoA signaling and dampening ROCK and MYH9 activities in endothelial cells. May act as effector for Golgi-bound HRAS and other Ras-like proteins. May promote HRAS-mediated transformation. Negative regulator of amino acid starvation-induced autophagy. The chain is Ras-interacting protein 1 (Rasip1) from Mus musculus (Mouse).